We begin with the raw amino-acid sequence, 348 residues long: Uroporphyrinogen decarboxylase (348 aa).

Substrate is bound by residues 27 to 31 (RQAGR), F46, D76, Y152, S207, and H320.

It belongs to the uroporphyrinogen decarboxylase family. In terms of assembly, homodimer.

It localises to the cytoplasm. It carries out the reaction uroporphyrinogen III + 4 H(+) = coproporphyrinogen III + 4 CO2. It participates in porphyrin-containing compound metabolism; protoporphyrin-IX biosynthesis; coproporphyrinogen-III from 5-aminolevulinate: step 4/4. Functionally, catalyzes the decarboxylation of four acetate groups of uroporphyrinogen-III to yield coproporphyrinogen-III. The polypeptide is Uroporphyrinogen decarboxylase (Bacillus mycoides (strain KBAB4) (Bacillus weihenstephanensis)).